The chain runs to 328 residues: UPF0252 protein PF0978 (328 aa).

The helical transmembrane segment at 3–23 (VPLLILLFLVLTSGCIAPSTP) threads the bilayer.

Belongs to the UPF0252 family.

The protein localises to the membrane. The sequence is that of UPF0252 protein PF0978 from Pyrococcus furiosus (strain ATCC 43587 / DSM 3638 / JCM 8422 / Vc1).